Reading from the N-terminus, the 385-residue chain is 8-amino-7-oxononanoate synthase (385 aa).

Arg-21 contacts substrate. 108 to 109 contacts pyridoxal 5'-phosphate; the sequence is GF. A substrate-binding site is contributed by His-133. Residues Ser-179, His-207, and Thr-233 each contribute to the pyridoxal 5'-phosphate site. N6-(pyridoxal phosphate)lysine is present on Lys-236. Thr-352 provides a ligand contact to substrate.

This sequence belongs to the class-II pyridoxal-phosphate-dependent aminotransferase family. BioF subfamily. Homodimer. The cofactor is pyridoxal 5'-phosphate.

It catalyses the reaction 6-carboxyhexanoyl-[ACP] + L-alanine + H(+) = (8S)-8-amino-7-oxononanoate + holo-[ACP] + CO2. The protein operates within cofactor biosynthesis; biotin biosynthesis. Catalyzes the decarboxylative condensation of pimeloyl-[acyl-carrier protein] and L-alanine to produce 8-amino-7-oxononanoate (AON), [acyl-carrier protein], and carbon dioxide. In Salmonella paratyphi B (strain ATCC BAA-1250 / SPB7), this protein is 8-amino-7-oxononanoate synthase.